Consider the following 443-residue polypeptide: Xaa-Pro dipeptidase (443 aa).

The Mn(2+) site is built by Asp246, Asp257, His339, Glu384, and Glu423.

The protein belongs to the peptidase M24B family. Bacterial-type prolidase subfamily. Requires Mn(2+) as cofactor.

The enzyme catalyses Xaa-L-Pro dipeptide + H2O = an L-alpha-amino acid + L-proline. In terms of biological role, splits dipeptides with a prolyl residue in the C-terminal position. The sequence is that of Xaa-Pro dipeptidase from Escherichia coli (strain SMS-3-5 / SECEC).